The primary structure comprises 296 residues: tRNA pseudouridine synthase B (296 aa).

D38 acts as the Nucleophile in catalysis.

The protein belongs to the pseudouridine synthase TruB family. Type 1 subfamily.

It catalyses the reaction uridine(55) in tRNA = pseudouridine(55) in tRNA. Functionally, responsible for synthesis of pseudouridine from uracil-55 in the psi GC loop of transfer RNAs. The protein is tRNA pseudouridine synthase B of Ehrlichia chaffeensis (strain ATCC CRL-10679 / Arkansas).